The primary structure comprises 231 residues: NADH-ubiquinone oxidoreductase chain 4 (231 aa).

Helical transmembrane passes span 1–21 (PIAG…YGII), 34–54 (MFLP…LTCL), 63–85 (IAYS…TPWG), 89–111 (AMAL…NTTY), 128–148 (ILPM…AIPP), and 169–189 (TIIM…HMFL).

The protein belongs to the complex I subunit 4 family.

It is found in the mitochondrion membrane. The catalysed reaction is a ubiquinone + NADH + 5 H(+)(in) = a ubiquinol + NAD(+) + 4 H(+)(out). Its function is as follows. Core subunit of the mitochondrial membrane respiratory chain NADH dehydrogenase (Complex I) that is believed to belong to the minimal assembly required for catalysis. Complex I functions in the transfer of electrons from NADH to the respiratory chain. The immediate electron acceptor for the enzyme is believed to be ubiquinone. In Deinagkistrodon acutus (Hundred-pace snake), this protein is NADH-ubiquinone oxidoreductase chain 4 (MT-ND4).